The sequence spans 186 residues: Potassium-transporting ATPase KdpC subunit (186 aa).

Residues 10 to 30 (LTIITMVLCGFLFPLAITLIG) traverse the membrane as a helical segment.

Belongs to the KdpC family. In terms of assembly, the system is composed of three essential subunits: KdpA, KdpB and KdpC.

The protein resides in the cell membrane. In terms of biological role, part of the high-affinity ATP-driven potassium transport (or Kdp) system, which catalyzes the hydrolysis of ATP coupled with the electrogenic transport of potassium into the cytoplasm. This subunit acts as a catalytic chaperone that increases the ATP-binding affinity of the ATP-hydrolyzing subunit KdpB by the formation of a transient KdpB/KdpC/ATP ternary complex. The protein is Potassium-transporting ATPase KdpC subunit of Staphylococcus aureus (strain COL).